We begin with the raw amino-acid sequence, 261 residues long: uncharacterized protein (261 aa).

One can recognise an HTH tetR-type domain in the interval 15-75 (SINPEDIISG…AMTDRALSKY (61 aa)). The H-T-H motif DNA-binding region spans 38-57 (SMPLLGKHLGVGVTSIYWYF). The interval 234–261 (AAGEVAVRRPTATADAPTPGARAKAVAR) is disordered. Low complexity predominate over residues 241 to 261 (RRPTATADAPTPGARAKAVAR).

This is an uncharacterized protein from Mycobacterium bovis (strain ATCC BAA-935 / AF2122/97).